Reading from the N-terminus, the 642-residue chain is Threonine--tRNA ligase (642 aa).

In terms of domain architecture, TGS spans 1–61 (MPVITLPDGS…ETDAELSIIT (61 aa)). Residues 243 to 534 (DHRKIGKQLD…LIEEYAGRFP (292 aa)) form a catalytic region. Cysteine 334, histidine 385, and histidine 511 together coordinate Zn(2+).

It belongs to the class-II aminoacyl-tRNA synthetase family. Homodimer. The cofactor is Zn(2+).

The protein resides in the cytoplasm. It catalyses the reaction tRNA(Thr) + L-threonine + ATP = L-threonyl-tRNA(Thr) + AMP + diphosphate + H(+). Its function is as follows. Catalyzes the attachment of threonine to tRNA(Thr) in a two-step reaction: L-threonine is first activated by ATP to form Thr-AMP and then transferred to the acceptor end of tRNA(Thr). Also edits incorrectly charged L-seryl-tRNA(Thr). This is Threonine--tRNA ligase from Shewanella baltica (strain OS155 / ATCC BAA-1091).